We begin with the raw amino-acid sequence, 729 residues long: Fatty acid oxidation complex subunit alpha (729 aa).

Residues 1–189 (MLYKGDTLYL…KIGLVDGVVK (189 aa)) are enoyl-CoA hydratase/isomerase. Aspartate 296 is a substrate binding site. The segment at 311-729 (ETPKQAAVLG…ARPVGSLKTA (419 aa)) is 3-hydroxyacyl-CoA dehydrogenase. Residues methionine 324, aspartate 343, 400–402 (VVE), lysine 407, and serine 429 each bind NAD(+). Catalysis depends on histidine 450, which acts as the For 3-hydroxyacyl-CoA dehydrogenase activity. Asparagine 453 contributes to the NAD(+) binding site. Substrate is bound by residues asparagine 500 and tyrosine 660. The interval 708–729 (RHNEPYYPPVEPARPVGSLKTA) is disordered.

It in the N-terminal section; belongs to the enoyl-CoA hydratase/isomerase family. In the C-terminal section; belongs to the 3-hydroxyacyl-CoA dehydrogenase family. As to quaternary structure, heterotetramer of two alpha chains (FadB) and two beta chains (FadA).

The catalysed reaction is a (3S)-3-hydroxyacyl-CoA + NAD(+) = a 3-oxoacyl-CoA + NADH + H(+). The enzyme catalyses a (3S)-3-hydroxyacyl-CoA = a (2E)-enoyl-CoA + H2O. It carries out the reaction a 4-saturated-(3S)-3-hydroxyacyl-CoA = a (3E)-enoyl-CoA + H2O. It catalyses the reaction (3S)-3-hydroxybutanoyl-CoA = (3R)-3-hydroxybutanoyl-CoA. The catalysed reaction is a (3Z)-enoyl-CoA = a 4-saturated (2E)-enoyl-CoA. The enzyme catalyses a (3E)-enoyl-CoA = a 4-saturated (2E)-enoyl-CoA. The protein operates within lipid metabolism; fatty acid beta-oxidation. Involved in the aerobic and anaerobic degradation of long-chain fatty acids via beta-oxidation cycle. Catalyzes the formation of 3-oxoacyl-CoA from enoyl-CoA via L-3-hydroxyacyl-CoA. It can also use D-3-hydroxyacyl-CoA and cis-3-enoyl-CoA as substrate. This Salmonella choleraesuis (strain SC-B67) protein is Fatty acid oxidation complex subunit alpha.